Consider the following 133-residue polypeptide: MTSRRGRAVGFIRDFQAFILKGNVVELAVAVIIGGAFNKIVSSFVGDLVMPLVNPLIPGGDWRTAVIGPGLKIGSFAGSVIDFLIIAFVLYLAIRAIERFKRKEEAVVAAAEPDVQQQMLATLERIADNLEAR.

2 helical membrane passes run 17–37 (AFILKGNVVELAVAVIIGGAF) and 73–93 (IGSFAGSVIDFLIIAFVLYLA).

The protein belongs to the MscL family. Homopentamer.

Its subcellular location is the cell inner membrane. In terms of biological role, channel that opens in response to stretch forces in the membrane lipid bilayer. May participate in the regulation of osmotic pressure changes within the cell. The polypeptide is Large-conductance mechanosensitive channel (Synechococcus elongatus (strain ATCC 33912 / PCC 7942 / FACHB-805) (Anacystis nidulans R2)).